Reading from the N-terminus, the 352-residue chain is D-alanine--D-alanine ligase (352 aa).

The region spanning 135 to 344 (KTVFAKAGLP…FPQLVDRLIE (210 aa)) is the ATP-grasp domain. Residue 171 to 226 (EETLNYPCFVKPANLGSSVGIAKVRSRSELEKALDQAASYDRRIIVEAGVIAREVE) participates in ATP binding. Mg(2+) is bound by residues Asp297, Glu311, and Asn313.

It belongs to the D-alanine--D-alanine ligase family. Requires Mg(2+) as cofactor. Mn(2+) is required as a cofactor.

Its subcellular location is the cytoplasm. It carries out the reaction 2 D-alanine + ATP = D-alanyl-D-alanine + ADP + phosphate + H(+). It functions in the pathway cell wall biogenesis; peptidoglycan biosynthesis. Cell wall formation. The chain is D-alanine--D-alanine ligase from Gloeothece citriformis (strain PCC 7424) (Cyanothece sp. (strain PCC 7424)).